We begin with the raw amino-acid sequence, 156 residues long: MSRRRRSERREVIADPRFGSETLARFVNMLMVSGKKSIAEKIVYGALDHIEAKTSQNSLEVLNKALENVQPVVEVKSRRVGGATYQVPIEVRPARRMALGMRWLIDAARKRGEKGMVMKLAAEVLDAKESRGSAVKKREDTHRMAEANKAFSHYRW.

The protein belongs to the universal ribosomal protein uS7 family. As to quaternary structure, part of the 30S ribosomal subunit. Contacts proteins S9 and S11.

Functionally, one of the primary rRNA binding proteins, it binds directly to 16S rRNA where it nucleates assembly of the head domain of the 30S subunit. Is located at the subunit interface close to the decoding center, probably blocks exit of the E-site tRNA. This chain is Small ribosomal subunit protein uS7, found in Methylococcus capsulatus (strain ATCC 33009 / NCIMB 11132 / Bath).